Here is a 298-residue protein sequence, read N- to C-terminus: Possible hemolysin C (298 aa).

2 CBS domains span residues 80 to 141 (MVPR…QNGC) and 145 to 202 (LIRK…IDDE).

This sequence belongs to the UPF0053 family. Hemolysin C subfamily.

This chain is Possible hemolysin C (tlyC), found in Rickettsia canadensis (strain McKiel).